The sequence spans 217 residues: Uridylate kinase (217 aa).

An ATP-binding site is contributed by 6-10 (KLSGR). Residue Gly38 coordinates UMP. Residues Gly39 and Arg43 each coordinate ATP. UMP is bound by residues Asp60 and 107–113 (FQPGQST). Residues Asn134, Tyr139, and Asp142 each contribute to the ATP site.

This sequence belongs to the UMP kinase family. As to quaternary structure, homohexamer.

It localises to the cytoplasm. It catalyses the reaction UMP + ATP = UDP + ADP. The protein operates within pyrimidine metabolism; CTP biosynthesis via de novo pathway; UDP from UMP (UMPK route): step 1/1. Its activity is regulated as follows. Inhibited by UTP. Functionally, catalyzes the reversible phosphorylation of UMP to UDP. The sequence is that of Uridylate kinase from Pyrobaculum aerophilum (strain ATCC 51768 / DSM 7523 / JCM 9630 / CIP 104966 / NBRC 100827 / IM2).